The primary structure comprises 188 residues: Ribosome hibernation promotion factor (188 aa).

Residues 93-125 (KTRVNRKKRKESEHEPFPATPETPPETAVDHDK) are disordered.

Belongs to the HPF/YfiA ribosome-associated protein family. Long HPF subfamily. In terms of assembly, interacts with 100S ribosomes.

The protein resides in the cytoplasm. Functionally, required for dimerization of active 70S ribosomes into 100S ribosomes in stationary phase; 100S ribosomes are translationally inactive and sometimes present during exponential growth. This chain is Ribosome hibernation promotion factor, found in Staphylococcus carnosus (strain TM300).